The primary structure comprises 491 residues: uncharacterized protein (491 aa).

A substrate-binding site is contributed by Trp-99. Asn-137 is a binding site for Ca(2+). His-138 lines the substrate pocket. Glu-177 and Asp-190 together coordinate Ca(2+). Arg-219 contacts substrate. Residues Asp-221, His-225, and Glu-245 each coordinate Ca(2+). Asp-221 serves as the catalytic Nucleophile. Position 224–225 (224–225 (KH)) interacts with substrate. Glu-245 serves as the catalytic Proton donor. 3 residues coordinate substrate: Gly-249, His-312, and Arg-360.

It belongs to the glycosyl hydrolase 13 family. The cofactor is Ca(2+).

It is found in the cytoplasm. The protein resides in the nucleus. This is an uncharacterized protein from Schizosaccharomyces pombe (strain 972 / ATCC 24843) (Fission yeast).